A 147-amino-acid polypeptide reads, in one-letter code: Ribonuclease H (147 aa).

The 142-residue stretch at 1–142 (MREVIIYTDG…CDELARAAIA (142 aa)) folds into the RNase H type-1 domain. Mg(2+) is bound by residues D9, E47, D69, and D134.

Belongs to the RNase H family. Monomer. The cofactor is Mg(2+).

The protein localises to the cytoplasm. It catalyses the reaction Endonucleolytic cleavage to 5'-phosphomonoester.. Its function is as follows. Endonuclease that specifically degrades the RNA of RNA-DNA hybrids. The sequence is that of Ribonuclease H from Symbiobacterium thermophilum (strain DSM 24528 / JCM 14929 / IAM 14863 / T).